Reading from the N-terminus, the 456-residue chain is Chitin synthase regulatory factor 1 (456 aa).

Disordered regions lie at residues 1 to 20 (MPAS…ALLV), 38 to 74 (ESPL…SLSS), and 139 to 158 (SKPS…SGSE). Residues 140-158 (KPSLSSNSSDSSFSKSGSE) are compositionally biased toward low complexity. Residues serine 227 and serine 230 each carry the phosphoserine modification. Sel1-like repeat units follow at residues 293–327 (NFVP…SLGH), 328–364 (DRSS…DKGN), 365–402 (ADAM…MLGH), and 403–438 (APAC…INDS).

In terms of biological role, involved in chitin biosynthesis. This is Chitin synthase regulatory factor 1 (chr1) from Schizosaccharomyces pombe (strain 972 / ATCC 24843) (Fission yeast).